Reading from the N-terminus, the 161-residue chain is Cell division protein SepF 2 (161 aa).

The tract at residues 19 to 47 (EDSEKAPELSSSRETKTKNQNQSKSLLRS) is disordered. The span at 21 to 35 (SEKAPELSSSRETKT) shows a compositional bias: basic and acidic residues.

It belongs to the SepF family. Homodimer. Interacts with FtsZ.

Its subcellular location is the cytoplasm. Its function is as follows. Cell division protein that is part of the divisome complex and is recruited early to the Z-ring. Probably stimulates Z-ring formation, perhaps through the cross-linking of FtsZ protofilaments. Its function overlaps with FtsA. The chain is Cell division protein SepF 2 from Desulforamulus reducens (strain ATCC BAA-1160 / DSM 100696 / MI-1) (Desulfotomaculum reducens).